We begin with the raw amino-acid sequence, 738 residues long: Pentatricopeptide repeat-containing protein At5g65570 (738 aa).

PPR repeat units follow at residues 98-128 (AEIS…MSER), 129-163 (HIVT…NVLP), 164-198 (DEYT…GLEV), 200-230 (NVFV…VEEK), 231-265 (DVVL…KVQP), 266-300 (NEYT…GFES), 301-331 (ALAS…IEYP), 332-366 (NQVS…SIKP), 367-401 (NSFT…GFDR), 402-432 (DKYA…LSEV), 433-467 (DVIS…GLQP), 468-502 (NDVT…KIML), and 503-537 (TNDH…DLVL). Residues 537 to 612 (LWRTLLSACK…NPAMSWVEIN (76 aa)) form a type E motif region. Residues 613-644 (KETHTFMAGDLFSHPNSEQILENLEELIKKSK) are type E(+) motif. Positions 645-738 (DLGYVEDKSC…DGSCSCGDYW (94 aa)) are type DYW motif.

Belongs to the PPR family. PCMP-H subfamily.

In Arabidopsis thaliana (Mouse-ear cress), this protein is Pentatricopeptide repeat-containing protein At5g65570 (PCMP-H47).